A 278-amino-acid chain; its full sequence is Undecaprenyl-diphosphatase 1 (278 aa).

The next 7 membrane-spanning stretches (helical) occupy residues 46 to 66 (VVGF…VYFF), 91 to 111 (YTFT…GLAA), 119 to 139 (LASL…MWFA), 153 to 173 (SLPD…FPGF), 191 to 211 (VAAT…AGLY), 225 to 245 (PLAV…AWLL), and 256 to 276 (FIIY…GGAI).

It belongs to the UppP family.

It localises to the cell membrane. It carries out the reaction di-trans,octa-cis-undecaprenyl diphosphate + H2O = di-trans,octa-cis-undecaprenyl phosphate + phosphate + H(+). Catalyzes the dephosphorylation of undecaprenyl diphosphate (UPP). Confers resistance to bacitracin. This Frankia alni (strain DSM 45986 / CECT 9034 / ACN14a) protein is Undecaprenyl-diphosphatase 1.